The sequence spans 788 residues: Protein translocase subunit SecA 2 (788 aa).

ATP is bound by residues Gln86, 104–108 (GEGKT), and Asp493.

Belongs to the SecA family. Monomer and homodimer. Part of the essential Sec protein translocation apparatus which comprises SecA, SecYEG and auxiliary proteins SecDF. Other proteins may also be involved.

It localises to the cell membrane. The protein localises to the cytoplasm. The enzyme catalyses ATP + H2O + cellular proteinSide 1 = ADP + phosphate + cellular proteinSide 2.. Its function is as follows. Part of the Sec protein translocase complex. Interacts with the SecYEG preprotein conducting channel. Has a central role in coupling the hydrolysis of ATP to the transfer of proteins into and across the cell membrane, serving as an ATP-driven molecular motor driving the stepwise translocation of polypeptide chains across the membrane. The sequence is that of Protein translocase subunit SecA 2 from Geobacillus thermodenitrificans (strain NG80-2).